Reading from the N-terminus, the 159-residue chain is 2-C-methyl-D-erythritol 2,4-cyclodiphosphate synthase (159 aa).

A divalent metal cation is bound by residues Asp-8 and His-10. 4-CDP-2-C-methyl-D-erythritol 2-phosphate is bound by residues Asp-8–His-10 and His-34–Ser-35. His-42 contacts a divalent metal cation. 4-CDP-2-C-methyl-D-erythritol 2-phosphate is bound by residues Asp-56–Gly-58, Phe-61–Asp-65, Ala-100–Leu-106, Thr-132–Glu-135, Phe-139, and Arg-142.

It belongs to the IspF family. As to quaternary structure, homotrimer. A divalent metal cation is required as a cofactor.

It catalyses the reaction 4-CDP-2-C-methyl-D-erythritol 2-phosphate = 2-C-methyl-D-erythritol 2,4-cyclic diphosphate + CMP. It functions in the pathway isoprenoid biosynthesis; isopentenyl diphosphate biosynthesis via DXP pathway; isopentenyl diphosphate from 1-deoxy-D-xylulose 5-phosphate: step 4/6. Functionally, involved in the biosynthesis of isopentenyl diphosphate (IPP) and dimethylallyl diphosphate (DMAPP), two major building blocks of isoprenoid compounds. Catalyzes the conversion of 4-diphosphocytidyl-2-C-methyl-D-erythritol 2-phosphate (CDP-ME2P) to 2-C-methyl-D-erythritol 2,4-cyclodiphosphate (ME-CPP) with a corresponding release of cytidine 5-monophosphate (CMP). In Escherichia coli O81 (strain ED1a), this protein is 2-C-methyl-D-erythritol 2,4-cyclodiphosphate synthase.